A 488-amino-acid chain; its full sequence is Diacylglycerol O-acyltransferase 1 (488 aa).

Residues 1 to 57 (MGDRGSSRRRRTGSRPSSHGGGGPAAAEEEVRDAAAGPDVGAAGDAPAPAPNKDGDA) are disordered. At 1–83 (MGDRGSSRRR…SLFSSDSGFS (83 aa)) the chain is on the cytoplasmic side. An involved in homomerization region spans residues 1–91 (MGDRGSSRRR…FSNYRGILNW (91 aa)). 2 positions are modified to phosphoserine: serine 17 and serine 18. The segment covering 34 to 47 (AAAGPDVGAAGDAP) has biased composition (low complexity). Residues 84-118 (NYRGILNWCVVMLILSNARLFLENLIKYGILVDPI) traverse the membrane as a helical segment. At 119–130 (QVVSLFLKDPYS) the chain is on the lumenal side. The segment at 119–130 (QVVSLFLKDPYS) is extracellular loop 1 (EL1). The helical transmembrane segment at 131–156 (WPAPCLVIAANVFAVAAFQVEKRLAV) threads the bilayer. The tract at residues 131–488 (WPAPCLVIAA…LNYEAPAAEA (358 aa)) is MBOAT fold. Topologically, residues 157–161 (GALTE) are cytoplasmic. The chain crosses the membrane as a helical span at residues 162–184 (QAGLLLHVANLATILCFPAAVVL). The Lumenal segment spans residues 185-191 (LVESITP). The chain crosses the membrane as a helical span at residues 192-223 (VGSLLALMAHTILFLKLFSYRDVNSWCRRARA). At 224 to 273 (KAASAGKKASSAAAPHTVSYPDNLTYRDLYYFLFAPTLCYELNFPRSPRI) the chain is on the cytoplasmic side. The tract at residues 224-276 (KAASAGKKASSAAAPHTVSYPDNLTYRDLYYFLFAPTLCYELNFPRSPRIRKR) is intracellular loop 1 (IL1). Residues 274 to 308 (RKRFLLRRILEMLFFTQLQVGLIQQWMVPTIQNSM) form a helical membrane-spanning segment. Topologically, residues 309-315 (KPFKDMD) are lumenal. The chain crosses the membrane as a helical span at residues 316–353 (YSRIIERLLKLAVPNHLIWLIFFYWLFHSCLNAVAELM). At 354–399 (QFGDREFYRDWWNSESVTYFWQNWNIPVHKWCIRHFYKPMLRRGSS) the chain is on the cytoplasmic side. An intracellular loop 2 (IL2) region spans residues 354 to 399 (QFGDREFYRDWWNSESVTYFWQNWNIPVHKWCIRHFYKPMLRRGSS). The short motif at 360 to 366 (FYRDWWN) is the FYXDWWN motif element. An acyl-CoA contacts are provided by residues 374-382 (WQNWNIPVH), tyrosine 390, and arginine 404. Positions 380-394 (PVHKWCIRHFYKPML) are amphipathic helix (AH). The helical transmembrane segment at 400 to 420 (KWMARTGVFLASAFFHEYLVS) threads the bilayer. Histidine 415 is a catalytic residue. The Lumenal portion of the chain corresponds to 421–428 (VPLRMFRL). The helical transmembrane segment at 429 to 447 (WAFTGMMAQIPLAWFVGRF) threads the bilayer. Over 448-449 (FQ) the chain is Cytoplasmic. Residues 450–481 (GNYGNAAVWLSLIIGQPIAVLMYVHDYYVLNY) form a helical membrane-spanning segment. Position 477 (tyrosine 477) interacts with an acyl-CoA. The Lumenal portion of the chain corresponds to 482–488 (EAPAAEA).

This sequence belongs to the membrane-bound acyltransferase family. Sterol o-acyltransferase subfamily. Homodimer or homotetramer; both forms have similar enzymatic activities.

It is found in the endoplasmic reticulum membrane. The catalysed reaction is an acyl-CoA + a 1,2-diacyl-sn-glycerol = a triacyl-sn-glycerol + CoA. It catalyses the reaction all-trans-retinol + an acyl-CoA = an all-trans-retinyl ester + CoA. The enzyme catalyses 2-(9Z-octadecenoyl)-glycerol + (9Z)-octadecenoyl-CoA = 1,2-di-(9Z-octadecenoyl)-sn-glycerol + CoA. It carries out the reaction 1,2-di-(9Z-octadecenoyl)-sn-glycerol + (9Z)-octadecenoyl-CoA = 1,2,3-tri-(9Z-octadecenoyl)-glycerol + CoA. The catalysed reaction is all-trans-retinol + hexadecanoyl-CoA = all-trans-retinyl hexadecanoate + CoA. It catalyses the reaction 1-O-(9Z-octadecenyl)-glycerol + (9Z)-octadecenoyl-CoA = 1-O-(9Z-octadecyl)-3-(9Z-octadecenoyl)-glycerol + CoA. The enzyme catalyses 1-O-(9Z-octadecyl)-3-(9Z-octadecenoyl)-glycerol + (9Z)-octadecenoyl-CoA = 1-O-(9Z-octadecenyl)-2,3-di-(9Z-octadecenoyl)glycerol + CoA. It carries out the reaction 1-(9Z-octadecenoyl)-glycerol + (9Z)-octadecenoyl-CoA = 1,2-di-(9Z-octadecenoyl)-glycerol + CoA. The catalysed reaction is 1,2-di-(9Z-octadecenoyl)-glycerol + (9Z)-octadecenoate + H(+) = 1,2,3-tri-(9Z-octadecenoyl)-glycerol + H2O. It catalyses the reaction 1-octadecanoyl-2-(5Z,8Z,11Z,14Z-eicosatetraenoyl)-sn-glycerol + (9Z)-octadecenoyl-CoA = 1-octadecanoyl-2-(5Z,8Z,11Z,14Z)-eicosatetraenoyl-3-(9Z)-octadecenoyl-sn-glycerol + CoA. The enzyme catalyses hexadecane-1,2-diol + 2 hexadecanoyl-CoA = 1,2-O,O-dihexadecanoyl-1,2-hexadecanediol + 2 CoA. It carries out the reaction hexadecane-1,2-diol + hexadecanoyl-CoA = 2-hydroxyhexadecyl hexadecanoate + CoA. The catalysed reaction is 2-(9Z-octadecenoyl)-glycerol + hexadecanoyl-CoA = 1-hexadecanoyl-2-(9Z-octadecenoyl)-sn-glycerol + CoA. It catalyses the reaction 1,2-di-(9Z-octadecenoyl)-sn-glycerol + hexadecanoyl-CoA = 1,2-di-(9Z)-octadecenoyl-3-hexadecanoyl-sn-glycerol + CoA. The enzyme catalyses hexadecan-1-ol + hexadecanoyl-CoA = hexadecanyl hexadecanoate + CoA. It carries out the reaction 13-cis-retinol + hexadecanoyl-CoA = 13-cis-retinyl hexadecanoate + CoA. The catalysed reaction is 1,3-di-(9Z-octadecenoyl)-glycerol + (9Z)-octadecenoyl-CoA = 1,2,3-tri-(9Z-octadecenoyl)-glycerol + CoA. It catalyses the reaction 2,3-di-(9Z)-octadecenoyl-sn-glycerol + (9Z)-octadecenoyl-CoA = 1,2,3-tri-(9Z-octadecenoyl)-glycerol + CoA. It participates in lipid metabolism; glycerolipid metabolism. XP620 is a selective DGAT1 inhibitor. Its function is as follows. Catalyzes the terminal and only committed step in triacylglycerol synthesis by using diacylglycerol and fatty acyl CoA as substrates. Highly expressed in epithelial cells of the small intestine and its activity is essential for the absorption of dietary fats. In liver, plays a role in esterifying exogenous fatty acids to glycerol, and is required to synthesize fat for storage. Also present in female mammary glands, where it produces fat in the milk. May be involved in VLDL (very low density lipoprotein) assembly. In contrast to DGAT2 it is not essential for survival. Functions as the major acyl-CoA retinol acyltransferase (ARAT) in the skin, where it acts to maintain retinoid homeostasis and prevent retinoid toxicity leading to skin and hair disorders. Exhibits additional acyltransferase activities, includin acyl CoA:monoacylglycerol acyltransferase (MGAT), wax monoester and wax diester synthases. Also able to use 1-monoalkylglycerol (1-MAkG) as an acyl acceptor for the synthesis of monoalkyl-monoacylglycerol (MAMAG). This Homo sapiens (Human) protein is Diacylglycerol O-acyltransferase 1.